Reading from the N-terminus, the 135-residue chain is MRKTKAPEIYALGQHISMSADKARRVIDQIRGRSYEETLMILELMPYRAAYPILKLVYSAASNASYTLDSNEANLFISKAEVNQGPAIKKLKPRARGRSYPIKRPTCHITILLKDISFYDSDSESVELNLLKKAR.

Belongs to the universal ribosomal protein uL22 family. In terms of assembly, part of the 50S ribosomal subunit.

The protein localises to the plastid. In terms of biological role, this protein binds specifically to 23S rRNA. Its function is as follows. The globular domain of the protein is located near the polypeptide exit tunnel on the outside of the subunit, while an extended beta-hairpin is found that lines the wall of the exit tunnel in the center of the 70S ribosome. This is Large ribosomal subunit protein uL22c (rpl22) from Cuscuta reflexa (Southern Asian dodder).